A 426-amino-acid chain; its full sequence is Glutamate-1-semialdehyde 2,1-aminomutase (426 aa).

An N6-(pyridoxal phosphate)lysine modification is found at lysine 265.

Belongs to the class-III pyridoxal-phosphate-dependent aminotransferase family. HemL subfamily. In terms of assembly, homodimer. Pyridoxal 5'-phosphate is required as a cofactor.

It localises to the cytoplasm. The catalysed reaction is (S)-4-amino-5-oxopentanoate = 5-aminolevulinate. Its pathway is porphyrin-containing compound metabolism; protoporphyrin-IX biosynthesis; 5-aminolevulinate from L-glutamyl-tRNA(Glu): step 2/2. This chain is Glutamate-1-semialdehyde 2,1-aminomutase, found in Klebsiella pneumoniae subsp. pneumoniae (strain ATCC 700721 / MGH 78578).